The chain runs to 428 residues: Serine--tRNA ligase (428 aa).

Thr-235 to Glu-237 contributes to the L-serine binding site. Arg-266–Glu-268 lines the ATP pocket. An L-serine-binding site is contributed by Glu-289. Glu-353–Ser-356 contacts ATP. Ser-389 provides a ligand contact to L-serine.

It belongs to the class-II aminoacyl-tRNA synthetase family. Type-1 seryl-tRNA synthetase subfamily. Homodimer. The tRNA molecule binds across the dimer.

The protein resides in the cytoplasm. It catalyses the reaction tRNA(Ser) + L-serine + ATP = L-seryl-tRNA(Ser) + AMP + diphosphate + H(+). The enzyme catalyses tRNA(Sec) + L-serine + ATP = L-seryl-tRNA(Sec) + AMP + diphosphate + H(+). The protein operates within aminoacyl-tRNA biosynthesis; selenocysteinyl-tRNA(Sec) biosynthesis; L-seryl-tRNA(Sec) from L-serine and tRNA(Sec): step 1/1. Its function is as follows. Catalyzes the attachment of serine to tRNA(Ser). Is also able to aminoacylate tRNA(Sec) with serine, to form the misacylated tRNA L-seryl-tRNA(Sec), which will be further converted into selenocysteinyl-tRNA(Sec). In Shewanella pealeana (strain ATCC 700345 / ANG-SQ1), this protein is Serine--tRNA ligase.